The chain runs to 100 residues: Urease subunit gamma (100 aa).

This sequence belongs to the urease gamma subunit family. As to quaternary structure, heterotrimer of UreA (gamma), UreB (beta) and UreC (alpha) subunits. Three heterotrimers associate to form the active enzyme.

The protein resides in the cytoplasm. It carries out the reaction urea + 2 H2O + H(+) = hydrogencarbonate + 2 NH4(+). Its pathway is nitrogen metabolism; urea degradation; CO(2) and NH(3) from urea (urease route): step 1/1. The polypeptide is Urease subunit gamma (Yersinia aldovae).